The primary structure comprises 716 residues: Polyribonucleotide nucleotidyltransferase (716 aa).

The Mg(2+) site is built by aspartate 495 and aspartate 501. A KH domain is found at 562–621 (PRLFRIQINPEQIGLVIGPGGKTIRSITEQTGAKIDIEDTGAVTISAVDADSALRAKSII). The 69-residue stretch at 631–699 (GDVYIGKVTR…QKGRVNLTRK (69 aa)) folds into the S1 motif domain.

The protein belongs to the polyribonucleotide nucleotidyltransferase family. Requires Mg(2+) as cofactor.

The protein resides in the cytoplasm. The catalysed reaction is RNA(n+1) + phosphate = RNA(n) + a ribonucleoside 5'-diphosphate. Functionally, involved in mRNA degradation. Catalyzes the phosphorolysis of single-stranded polyribonucleotides processively in the 3'- to 5'-direction. The protein is Polyribonucleotide nucleotidyltransferase of Synechococcus elongatus (strain ATCC 33912 / PCC 7942 / FACHB-805) (Anacystis nidulans R2).